The primary structure comprises 185 residues: MVIGVLTLQGGFAEHIAILESLGVEHRRVRVPNDLLGLDGLIIPGGESTVMDKLARAFDLAEPLRAAINNGLPVFATCAGLIYLGTVENPAKGQQTLGCLDVVVRRNAFGRQVDSFDAVVDVEGIDANVAFIRAPEVISCGAGVTVTARVGDHVVGVRQGKIHAYAFHPESAGEVRLHQAWLASI.

46–48 lines the L-glutamine pocket; the sequence is GES. Residue C78 is the Nucleophile of the active site. L-glutamine contacts are provided by residues R106 and 132 to 133; that span reads IR. Residues H168 and E170 each act as charge relay system in the active site.

This sequence belongs to the glutaminase PdxT/SNO family. In terms of assembly, in the presence of PdxS, forms a dodecamer of heterodimers. Only shows activity in the heterodimer.

It carries out the reaction aldehydo-D-ribose 5-phosphate + D-glyceraldehyde 3-phosphate + L-glutamine = pyridoxal 5'-phosphate + L-glutamate + phosphate + 3 H2O + H(+). The catalysed reaction is L-glutamine + H2O = L-glutamate + NH4(+). It functions in the pathway cofactor biosynthesis; pyridoxal 5'-phosphate biosynthesis. Functionally, catalyzes the hydrolysis of glutamine to glutamate and ammonia as part of the biosynthesis of pyridoxal 5'-phosphate. The resulting ammonia molecule is channeled to the active site of PdxS. This is Pyridoxal 5'-phosphate synthase subunit PdxT from Corynebacterium diphtheriae (strain ATCC 700971 / NCTC 13129 / Biotype gravis).